We begin with the raw amino-acid sequence, 517 residues long: Crotonobetaine/carnitine--CoA ligase (517 aa).

This sequence belongs to the ATP-dependent AMP-binding enzyme family.

The enzyme catalyses 4-(trimethylamino)butanoate + ATP + CoA = 4-(trimethylamino)butanoyl-CoA + AMP + diphosphate. It catalyses the reaction crotonobetaine + ATP + CoA = crotonobetainyl-CoA + AMP + diphosphate. The catalysed reaction is (R)-carnitine + ATP + CoA = (R)-carnitinyl-CoA + AMP + diphosphate. Its pathway is amine and polyamine metabolism; carnitine metabolism. Catalyzes the transfer of CoA to carnitine, generating the initial carnitinyl-CoA needed for the CaiB reaction cycle. Also has activity toward crotonobetaine and gamma-butyrobetaine. The chain is Crotonobetaine/carnitine--CoA ligase from Escherichia coli O1:K1 / APEC.